The primary structure comprises 169 residues: Transmembrane protein 89 (169 aa).

An N-terminal signal peptide occupies residues 1 to 22; it reads MLYTLLLVPSLFLLVMPVPSQG. The Extracellular segment spans residues 23 to 75; it reads WSRPLWYQVGLDLQPWGCQPNSPDIWGCQPNSLDSCKNSLGCPGYWLGLGGNR. A helical transmembrane segment spans residues 76 to 96; the sequence is IYPVAGVTITTTMLLVVSRVI. Over 97-169 the chain is Cytoplasmic; the sequence is VHRWRAKVAK…QIKGSPPQSG (73 aa).

The protein resides in the membrane. The polypeptide is Transmembrane protein 89 (Tmem89) (Mus musculus (Mouse)).